Reading from the N-terminus, the 68-residue chain is Large ribosomal subunit protein bL31 (68 aa).

Zn(2+) is bound by residues Cys-16, Cys-18, Cys-36, and Cys-39.

It belongs to the bacterial ribosomal protein bL31 family. Type A subfamily. In terms of assembly, part of the 50S ribosomal subunit. It depends on Zn(2+) as a cofactor.

Functionally, binds the 23S rRNA. This Dictyoglomus turgidum (strain DSM 6724 / Z-1310) protein is Large ribosomal subunit protein bL31.